A 198-amino-acid polypeptide reads, in one-letter code: FMN-dependent NADH:quinone oxidoreductase (198 aa).

92-95 contributes to the FMN binding site; the sequence is MWNL.

Belongs to the azoreductase type 1 family. In terms of assembly, homodimer. It depends on FMN as a cofactor.

It catalyses the reaction 2 a quinone + NADH + H(+) = 2 a 1,4-benzosemiquinone + NAD(+). The catalysed reaction is N,N-dimethyl-1,4-phenylenediamine + anthranilate + 2 NAD(+) = 2-(4-dimethylaminophenyl)diazenylbenzoate + 2 NADH + 2 H(+). Functionally, quinone reductase that provides resistance to thiol-specific stress caused by electrophilic quinones. Its function is as follows. Also exhibits azoreductase activity. Catalyzes the reductive cleavage of the azo bond in aromatic azo compounds to the corresponding amines. This Lachnoclostridium phytofermentans (strain ATCC 700394 / DSM 18823 / ISDg) (Clostridium phytofermentans) protein is FMN-dependent NADH:quinone oxidoreductase.